Reading from the N-terminus, the 429-residue chain is Histidine--tRNA ligase (429 aa).

Belongs to the class-II aminoacyl-tRNA synthetase family. As to quaternary structure, homodimer.

Its subcellular location is the cytoplasm. The catalysed reaction is tRNA(His) + L-histidine + ATP = L-histidyl-tRNA(His) + AMP + diphosphate + H(+). The polypeptide is Histidine--tRNA ligase (Streptococcus pneumoniae (strain Taiwan19F-14)).